Here is a 385-residue protein sequence, read N- to C-terminus: Lipid-A-disaccharide synthase (385 aa).

It belongs to the LpxB family.

The catalysed reaction is a lipid X + a UDP-2-N,3-O-bis[(3R)-3-hydroxyacyl]-alpha-D-glucosamine = a lipid A disaccharide + UDP + H(+). The protein operates within bacterial outer membrane biogenesis; LPS lipid A biosynthesis. Its function is as follows. Condensation of UDP-2,3-diacylglucosamine and 2,3-diacylglucosamine-1-phosphate to form lipid A disaccharide, a precursor of lipid A, a phosphorylated glycolipid that anchors the lipopolysaccharide to the outer membrane of the cell. This chain is Lipid-A-disaccharide synthase, found in Pseudoalteromonas translucida (strain TAC 125).